A 78-amino-acid chain; its full sequence is Exodeoxyribonuclease 7 small subunit (78 aa).

It belongs to the XseB family. Heterooligomer composed of large and small subunits.

It localises to the cytoplasm. It catalyses the reaction Exonucleolytic cleavage in either 5'- to 3'- or 3'- to 5'-direction to yield nucleoside 5'-phosphates.. Bidirectionally degrades single-stranded DNA into large acid-insoluble oligonucleotides, which are then degraded further into small acid-soluble oligonucleotides. In Finegoldia magna (strain ATCC 29328 / DSM 20472 / WAL 2508) (Peptostreptococcus magnus), this protein is Exodeoxyribonuclease 7 small subunit.